Consider the following 108-residue polypeptide: Parvalbumin beta (108 aa).

A1 is subject to N-acetylalanine. A disulfide bridge connects residues C11 and C33. 2 consecutive EF-hand domains span residues 38-73 (KSADDIKKAFVFIDQDKSGFIEEDELKLFLQVFKAG) and 77-108 (LTDAETKAFLKAGDSDGDGAIGVEEWVALVKA). D51, D53, S55, F57, E59, E62, D90, D92, D94, A96, and E101 together coordinate Ca(2+).

The protein belongs to the parvalbumin family.

Its function is as follows. In muscle, parvalbumin is thought to be involved in relaxation after contraction. It binds two calcium ions. The sequence is that of Parvalbumin beta from Merlangius merlangus (Whiting).